A 227-amino-acid polypeptide reads, in one-letter code: DNA repair protein RecO (227 aa).

Belongs to the RecO family.

Functionally, involved in DNA repair and RecF pathway recombination. This Pseudomonas putida (strain W619) protein is DNA repair protein RecO.